Reading from the N-terminus, the 300-residue chain is Protoheme IX farnesyltransferase 1 (300 aa).

The next 9 membrane-spanning stretches (helical) occupy residues 28-48, 54-74, 100-120, 122-142, 149-169, 176-196, 222-242, 243-263, and 280-300; these read VVAL…PTIL, VAGL…NHLI, ALLF…VFTN, LTAW…TAYL, NIVI…TAVT, ALLL…ALAI, CILL…LVGM, SGPL…YKAW, and FSIY…YLWA.

The protein belongs to the UbiA prenyltransferase family. Protoheme IX farnesyltransferase subfamily.

The protein localises to the cell inner membrane. It catalyses the reaction heme b + (2E,6E)-farnesyl diphosphate + H2O = Fe(II)-heme o + diphosphate. The protein operates within porphyrin-containing compound metabolism; heme O biosynthesis; heme O from protoheme: step 1/1. Functionally, converts heme B (protoheme IX) to heme O by substitution of the vinyl group on carbon 2 of heme B porphyrin ring with a hydroxyethyl farnesyl side group. This is Protoheme IX farnesyltransferase 1 from Shewanella sp. (strain ANA-3).